Consider the following 121-residue polypeptide: Large ribosomal subunit protein uL18 (121 aa).

The protein belongs to the universal ribosomal protein uL18 family. As to quaternary structure, part of the 50S ribosomal subunit; part of the 5S rRNA/L5/L18/L25 subcomplex. Contacts the 5S and 23S rRNAs.

In terms of biological role, this is one of the proteins that bind and probably mediate the attachment of the 5S RNA into the large ribosomal subunit, where it forms part of the central protuberance. The protein is Large ribosomal subunit protein uL18 of Ureaplasma parvum serovar 3 (strain ATCC 27815 / 27 / NCTC 11736).